Reading from the N-terminus, the 256-residue chain is Homeobox protein goosecoid (256 aa).

A DNA-binding region (homeobox) is located at residues 160–219 (KRRHRTIFTDEQLEALENLFQETKYPDVGTREQLARKVHLREEKVEVWFKNRRAKWRRQK). The interval 213-256 (AKWRRQKRSSSEESENAEKWNKTSSKASPEKREEEGKSDLDSDS) is disordered. Residues 240-256 (SPEKREEEGKSDLDSDS) show a composition bias toward basic and acidic residues.

The protein belongs to the paired homeobox family. Bicoid subfamily. As to expression, in early gastrulation, expressed in the dorsal lip. In later stages of development found in head, limbs and body wall. In the embryo, expressed in the postotic cranial neural crest cells, the frontonasal prominence, the first branchial arch and cleft, and specific regions of large joints.

It localises to the nucleus. Regulates chordin (CHRD). May play a role in spatial programing within discrete embryonic fields or lineage compartments during organogenesis. In concert with NKX3-2, plays a role in defining the structural components of the middle ear; required for the development of the entire tympanic ring. Goosecoid-expressing regions of the gastrulating mouse egg cylinder have organizer-like activity when transplanted into Xenopus embryos. Probably involved in the regulatory networks that define neural crest cell fate specification and determine mesoderm cell lineages in mammals. The chain is Homeobox protein goosecoid (Gsc) from Mus musculus (Mouse).